The following is a 303-amino-acid chain: Probable phytol kinase, chloroplastic (303 aa).

Residues 1–49 (MAAAAAWTGAASPNSLLLSRSPPHAAALAPSPGSSMRRRLLLGVGTPAV) constitute a chloroplast transit peptide. 6 consecutive transmembrane segments (helical) span residues 98–118 (VVHV…SNST), 122–144 (YFAA…RLYT), 168–188 (YVLV…IGIV), 227–247 (FISG…LGYI), 254–274 (ALGK…VPVT), and 276–296 (VVDD…LLFS).

The protein belongs to the polyprenol kinase family.

The protein localises to the plastid. Its subcellular location is the chloroplast membrane. It catalyses the reaction phytol + CTP = phytyl phosphate + CDP + H(+). It functions in the pathway cofactor biosynthesis; tocopherol biosynthesis. Its function is as follows. Involved in the activation and reutilization of phytol from chlorophyll degradation in plant metabolism, including tocopherol biosynthesis. Catalyzes the conversion of phytol to phytol monophosphate (PMP). The polypeptide is Probable phytol kinase, chloroplastic (Zea mays (Maize)).